Reading from the N-terminus, the 68-residue chain is Large ribosomal subunit protein bL31 (68 aa).

Residues cysteine 16, cysteine 18, cysteine 37, and cysteine 40 each coordinate Zn(2+).

Belongs to the bacterial ribosomal protein bL31 family. Type A subfamily. Part of the 50S ribosomal subunit. Requires Zn(2+) as cofactor.

In terms of biological role, binds the 23S rRNA. The chain is Large ribosomal subunit protein bL31 from Nitrosococcus oceani (strain ATCC 19707 / BCRC 17464 / JCM 30415 / NCIMB 11848 / C-107).